Consider the following 189-residue polypeptide: NADH-quinone oxidoreductase subunit B (189 aa).

[4Fe-4S] cluster is bound by residues cysteine 39, cysteine 40, cysteine 104, and cysteine 135.

The protein belongs to the complex I 20 kDa subunit family. NDH-1 is composed of 14 different subunits. Subunits NuoB, C, D, E, F, and G constitute the peripheral sector of the complex. [4Fe-4S] cluster is required as a cofactor.

It localises to the cell inner membrane. The catalysed reaction is a quinone + NADH + 5 H(+)(in) = a quinol + NAD(+) + 4 H(+)(out). NDH-1 shuttles electrons from NADH, via FMN and iron-sulfur (Fe-S) centers, to quinones in the respiratory chain. The immediate electron acceptor for the enzyme in this species is believed to be a menaquinone. Couples the redox reaction to proton translocation (for every two electrons transferred, four hydrogen ions are translocated across the cytoplasmic membrane), and thus conserves the redox energy in a proton gradient. The polypeptide is NADH-quinone oxidoreductase subunit B (Chlorobium phaeobacteroides (strain DSM 266 / SMG 266 / 2430)).